The chain runs to 260 residues: MIEQPAACRIHVEALGPTFEAQAEQWAQRLNLPLQVADGEFALQVGEQGLQLQQLGPDAPGPVRVDFVEGGAAHRRLYGGGSGQMIAKAVGIAQGVRPRVLDATAGLGKDAFVLASLGCEMSLIERQPLIGALLEDGLARAAEDFDVAPIVARMKLLKGNSIEVMRNWEGEPPQVIYLDPMFPHREKTALVKKEMRLFRPLVGDDPDAPALLEAALALATHRVVVKRPRKAPCIEGPKPSHALDGKSSRYDIYPKKALKA.

Residues E125 to R126 and D179 each bind S-adenosyl-L-methionine.

Belongs to the methyltransferase superfamily. RsmJ family.

The protein resides in the cytoplasm. It catalyses the reaction guanosine(1516) in 16S rRNA + S-adenosyl-L-methionine = N(2)-methylguanosine(1516) in 16S rRNA + S-adenosyl-L-homocysteine + H(+). Functionally, specifically methylates the guanosine in position 1516 of 16S rRNA. This is Ribosomal RNA small subunit methyltransferase J from Pseudomonas fluorescens (strain Pf0-1).